A 298-amino-acid polypeptide reads, in one-letter code: Isochorismatase domain-containing protein 1 (298 aa).

Y160 is subject to Phosphotyrosine. K279 is subject to N6-succinyllysine.

It belongs to the isochorismatase family.

In Bos taurus (Bovine), this protein is Isochorismatase domain-containing protein 1 (ISOC1).